Consider the following 642-residue polypeptide: Arginine--tRNA ligase, chloroplastic/mitochondrial (642 aa).

The N-terminal 53 residues, 1 to 53 (MFIFPKDENRRETLTTKLRFSADHLTFTTVTEKLRATAWRFAFSSRAKSVVAM), are a transit peptide targeting the chloroplast and mitochondrion. Position 54 is an N-acetylalanine (alanine 54). Residues 190–201 (PNIAKEMHVGHL) carry the 'HIGH' region motif.

Belongs to the class-I aminoacyl-tRNA synthetase family.

It localises to the plastid. The protein localises to the chloroplast. Its subcellular location is the mitochondrion. It catalyses the reaction tRNA(Arg) + L-arginine + ATP = L-arginyl-tRNA(Arg) + AMP + diphosphate. In terms of biological role, forms part of a macromolecular complex that catalyzes the attachment of specific amino acids to cognate tRNAs during protein synthesis. The sequence is that of Arginine--tRNA ligase, chloroplastic/mitochondrial from Arabidopsis thaliana (Mouse-ear cress).